The following is a 159-amino-acid chain: MDLEIFDDTNSVPAEKIQLVKDVLEFSGKYLELPEDTEMSVTLMNNEQIHEINLKYRGVDKATDVISFAIEEDDPDELPIILPDDVDFEEPKNIGDMMISMDKVKEQAEYLGHSEDRELGFLTVHGFLHLNGYDHMKAEDEKVMFKLQRDILDAYGLKR.

Zn(2+) is bound by residues His-125, His-129, and His-135.

It belongs to the endoribonuclease YbeY family. It depends on Zn(2+) as a cofactor.

It is found in the cytoplasm. Its function is as follows. Single strand-specific metallo-endoribonuclease involved in late-stage 70S ribosome quality control and in maturation of the 3' terminus of the 16S rRNA. This chain is Endoribonuclease YbeY, found in Ligilactobacillus salivarius (strain UCC118) (Lactobacillus salivarius).